We begin with the raw amino-acid sequence, 439 residues long: MAESPAFLSAKDEGSFAYLTIKDRTPQILTKVIDTLHRHKSEFFEKHGEEGIEAEKKAISLLSKLRNELQTDKPITPLVDKCVDTHIWNQYLEYQRSLLNEGDGEPRWFFSPWLFVECYMYRRIHEAIMQSPPIHDFDVFKESKEENFFESQGSIDALCSHLLQLKPVKGLREEQIQDEFFKLLQISLWGNKCDLSLSGGESSSQKANIINCLQDLKPFILINDTESLWALLSKLKKTVETPVVRVDIVLDNSGFELITDLVLADFLFSSELATEIHFHGKSIPWFVSDVTEHDFNWIVEHMKSSNLESMSTCGACWEAYARMGRWAYHDHAFWTLPHPYCVMPQVAPDLYAELQKAHLILFKGDLNYRKLMGDRKWKFTFPFHQALSGFHPAPLCSIRTLKCELQVGLQPGQAEQLTASDPHWLTTGRYGILQFDGPL.

Position 2 is an N-acetylalanine (Ala-2). Ser-4 carries the phosphoserine modification. At Lys-40 the chain carries N6-acetyllysine. Mn(2+) is bound by residues Asp-251 and Asn-252. Substrate is bound at residue 251–252 (DN). Glu-256 and Asp-289 together coordinate S-adenosyl-L-methionine. Position 289 (Asp-289) interacts with Mn(2+). Substrate is bound by residues 365–369 (DLNYR) and Lys-402. Positions 399 to 402 (RTLK) match the Subfamily III RTxK motif motif.

The protein belongs to the damage-control phosphatase family. Sugar phosphate phosphatase III subfamily. It depends on Mn(2+) as a cofactor. The cofactor is Ni(2+). Post-translationally, automethylated.

The enzyme catalyses beta-D-fructose 1-phosphate + H2O = D-fructose + phosphate. It carries out the reaction beta-D-fructose 6-phosphate = dihydroxyacetone + D-glyceraldehyde 3-phosphate. It catalyses the reaction L-glutamyl-[protein] + S-adenosyl-L-methionine = [protein]-L-glutamate 5-O-methyl ester + S-adenosyl-L-homocysteine. In terms of biological role, metal-dependent phosphatase that shows phosphatase activity against several substrates, including fructose-1-phosphate and fructose-6-phosphate. Its preference for fructose-1-phosphate, a strong glycating agent that causes DNA damage rather than a canonical yeast metabolite, suggests a damage-control function in hexose phosphate metabolism. Has also been shown to have O-methyltransferase activity that methylates glutamate residues of target proteins to form gamma-glutamyl methyl ester residues. Possibly methylates PCNA, suggesting it is involved in the DNA damage response. This Mus musculus (Mouse) protein is Damage-control phosphatase ARMT1.